The sequence spans 1203 residues: DNA-directed RNA polymerase subunit beta' (1203 aa).

Zn(2+)-binding residues include C60, C62, C75, and C78. Mg(2+) is bound by residues D449, D451, and D453. Residues C818, C892, C899, and C902 each coordinate Zn(2+).

Belongs to the RNA polymerase beta' chain family. In terms of assembly, the RNAP catalytic core consists of 2 alpha, 1 beta, 1 beta' and 1 omega subunit. When a sigma factor is associated with the core the holoenzyme is formed, which can initiate transcription. Mg(2+) is required as a cofactor. It depends on Zn(2+) as a cofactor.

It catalyses the reaction RNA(n) + a ribonucleoside 5'-triphosphate = RNA(n+1) + diphosphate. DNA-dependent RNA polymerase catalyzes the transcription of DNA into RNA using the four ribonucleoside triphosphates as substrates. This is DNA-directed RNA polymerase subunit beta' from Bacillus cereus (strain ATCC 10987 / NRS 248).